The following is a 378-amino-acid chain: Prolargin (378 aa).

An N-terminal signal peptide occupies residues 1-21 (MRASFFWLLPLLLILASVAQG). Residues 22-62 (QPTRPKPGIRRKPKPRPTPRFPQAPEPAEPTDLPPPLPPGP) are disordered. A compositionally biased stretch (basic residues) spans 28 to 38 (PGIRRKPKPRP). The segment covering 39 to 62 (TPRFPQAPEPAEPTDLPPPLPPGP) has biased composition (pro residues). LRR repeat units follow at residues 91–110 (RRVP…NNFI), 111–134 (TELP…NNRI), 135–158 (RKVD…KNQL), 159–179 (EEVP…QNLI), 180–203 (SRIP…HNRL), 204–229 (SDGV…HNIL), 230–250 (RKMP…SNKI), 251–274 (ETIP…YNKL), 275–299 (SDRG…HNKI), 300–319 (SNVP…NNSI), 320–358 (EKIN…GNFL), and 359–378 (KPPI…SVVI). An N-linked (GlcNAc...) asparagine glycan is attached at N120. N-linked (GlcNAc...) asparagine glycosylation is found at N285, N316, and N323. An intrachain disulfide couples C328 to C369.

The protein belongs to the small leucine-rich proteoglycan (SLRP) family. SLRP class II subfamily. Binds the basement membrane heparan sulfate proteoglycan perlecan and triple helical collagens type I and type II. Glycosylated; contains heparan sulfate. In terms of tissue distribution, expressed in cartilage throughout both fetal development and postnatal life. It is also expressed in the developing embryo prior to skeletogenesis. In adult, highest expression in lung, lower levels in cardiac and skeletal muscle.

The protein localises to the secreted. It localises to the extracellular space. It is found in the extracellular matrix. Functionally, may anchor basement membranes to the underlying connective tissue. This chain is Prolargin (Prelp), found in Mus musculus (Mouse).